The chain runs to 439 residues: uncharacterized protein (439 aa).

The signal sequence occupies residues 1 to 22; the sequence is MWVALKRFGFLSGLLALTVLSA. Residue Cys-23 is the site of N-palmitoyl cysteine attachment. A lipid anchor (S-diacylglycerol cysteine) is attached at Cys-23.

This sequence belongs to the MG067/MG068/MG395 family.

It localises to the cell membrane. This is an uncharacterized protein from Mycoplasma pneumoniae (strain ATCC 29342 / M129 / Subtype 1) (Mycoplasmoides pneumoniae).